We begin with the raw amino-acid sequence, 249 residues long: Ribonuclease 3 (249 aa).

Residues 29–151 (SSDIEVIKKN…LIGALYECLR (123 aa)) form the RNase III domain. Glu-65 lines the Mg(2+) pocket. Asp-69 is a catalytic residue. Mg(2+) is bound by residues Glu-137 and Glu-140. Glu-140 is a catalytic residue. Residues 179-249 (NEKSALQEWS…AKEALKKLTN (71 aa)) form the DRBM domain. A disordered region spans residues 227 to 249 (GWGSSRKKAQKEAAKEALKKLTN). A compositionally biased stretch (basic and acidic residues) spans 236–249 (QKEAAKEALKKLTN).

Belongs to the ribonuclease III family. As to quaternary structure, homodimer. Mg(2+) serves as cofactor.

The protein resides in the cytoplasm. It carries out the reaction Endonucleolytic cleavage to 5'-phosphomonoester.. Functionally, digests double-stranded RNA. Involved in the processing of primary rRNA transcript to yield the immediate precursors to the large and small rRNAs (23S and 16S). Processes some mRNAs, and tRNAs when they are encoded in the rRNA operon. Processes pre-crRNA and tracrRNA of type II CRISPR loci if present in the organism. The polypeptide is Ribonuclease 3 (Prochlorococcus marinus (strain SARG / CCMP1375 / SS120)).